The following is a 246-amino-acid chain: Octanoyltransferase (246 aa).

Residues 50-231 (PDTDDEIWVV…RLIAHLDGAT (182 aa)) form the BPL/LPL catalytic domain. Substrate-binding positions include 90 to 97 (RGGQITYH), 162 to 164 (ALG), and 175 to 177 (GLS). Cysteine 193 acts as the Acyl-thioester intermediate in catalysis.

It belongs to the LipB family.

It is found in the cytoplasm. The enzyme catalyses octanoyl-[ACP] + L-lysyl-[protein] = N(6)-octanoyl-L-lysyl-[protein] + holo-[ACP] + H(+). It participates in protein modification; protein lipoylation via endogenous pathway; protein N(6)-(lipoyl)lysine from octanoyl-[acyl-carrier-protein]: step 1/2. Its function is as follows. Catalyzes the transfer of endogenously produced octanoic acid from octanoyl-acyl-carrier-protein onto the lipoyl domains of lipoate-dependent enzymes. Lipoyl-ACP can also act as a substrate although octanoyl-ACP is likely to be the physiological substrate. In Burkholderia pseudomallei (strain 1106a), this protein is Octanoyltransferase.